A 225-amino-acid polypeptide reads, in one-letter code: MSVASTSSGFTPFSRRRGPLDPLFAEVDRALRVLSGAASSARPYPASAAEPVPPLSDQQKRHAAGLMRVNHVGEVCAQALYRGQAAACREAPVRELLLHAAAEEVDHLAWCGRRLEELGSRPSLLNPLWYAGSFTLGVLASCAGTARNLGFMAETERQVEAHLDGHLRSLPEADQRSRQIVSQMKDDEAQHRASAERAGGVPLPAPVRGAMRAMSRLMTSTAYWI.

Residues 1-11 (MSVASTSSGFT) show a composition bias toward polar residues. Residues 1-20 (MSVASTSSGFTPFSRRRGPL) form a disordered region. Positions 74, 104, 107, 156, 188, and 191 each coordinate Fe cation. The tract at residues 181–203 (VSQMKDDEAQHRASAERAGGVPL) is disordered. Positions 184–195 (MKDDEAQHRASA) are enriched in basic and acidic residues.

It belongs to the COQ7 family. It depends on Fe cation as a cofactor.

It is found in the cell membrane. The enzyme catalyses a 5-methoxy-2-methyl-3-(all-trans-polyprenyl)benzene-1,4-diol + AH2 + O2 = a 3-demethylubiquinol + A + H2O. Its pathway is cofactor biosynthesis; ubiquinone biosynthesis. Catalyzes the hydroxylation of 2-nonaprenyl-3-methyl-6-methoxy-1,4-benzoquinol during ubiquinone biosynthesis. The sequence is that of 3-demethoxyubiquinol 3-hydroxylase from Bordetella petrii (strain ATCC BAA-461 / DSM 12804 / CCUG 43448).